The sequence spans 356 residues: Neutral protease 2 homolog UREG_03761 (356 aa).

The first 19 residues, 1–19, serve as a signal peptide directing secretion; that stretch reads MRFSSSFLSVLALASQALA. A propeptide spanning residues 20–181 is cleaved from the precursor; that stretch reads FPLNDLPTTD…ALPEATLDKR (162 aa). 2 disulfide bridges follow: cysteine 189–cysteine 259 and cysteine 266–cysteine 284. Residue histidine 308 coordinates Zn(2+). The active site involves glutamate 309. Zn(2+)-binding residues include histidine 312 and aspartate 323.

This sequence belongs to the peptidase M35 family. Zn(2+) is required as a cofactor.

Its subcellular location is the secreted. It catalyses the reaction Preferential cleavage of bonds with hydrophobic residues in P1'. Also 3-Asn-|-Gln-4 and 8-Gly-|-Ser-9 bonds in insulin B chain.. In terms of biological role, secreted metalloproteinase that allows assimilation of proteinaceous substrates. Shows high activities on basic nuclear substrates such as histone and protamine. The protein is Neutral protease 2 homolog UREG_03761 of Uncinocarpus reesii (strain UAMH 1704).